The following is a 1018-amino-acid chain: DNA polymerase gamma (1018 aa).

This sequence belongs to the DNA polymerase type-A family. The cofactor is Mg(2+).

The protein localises to the mitochondrion. It carries out the reaction DNA(n) + a 2'-deoxyribonucleoside 5'-triphosphate = DNA(n+1) + diphosphate. Involved in the replication of mitochondrial DNA. This Schizosaccharomyces pombe (strain 972 / ATCC 24843) (Fission yeast) protein is DNA polymerase gamma (mip1).